The sequence spans 257 residues: 6-phosphogluconolactonase (257 aa).

The residue at position 2 (Ala-2) is an N-acetylalanine. A Phosphoserine modification is found at Ser-49. At Lys-180 the chain carries N6-acetyllysine.

This sequence belongs to the glucosamine/galactosamine-6-phosphate isomerase family. 6-phosphogluconolactonase subfamily.

The protein resides in the cytoplasm. It carries out the reaction 6-phospho-D-glucono-1,5-lactone + H2O = 6-phospho-D-gluconate + H(+). The protein operates within carbohydrate degradation; pentose phosphate pathway; D-ribulose 5-phosphate from D-glucose 6-phosphate (oxidative stage): step 2/3. In terms of biological role, hydrolysis of 6-phosphogluconolactone to 6-phosphogluconate. The polypeptide is 6-phosphogluconolactonase (Rattus norvegicus (Rat)).